A 202-amino-acid chain; its full sequence is MDYFPVIFSLLFVAFQGAPETAVLGAELSPRAEKEVQSPPPSTSWRPRRSKRCSCSSLMDKECVYFCHLDIIWVNTPERVVPYGLGSPSRSKRSLKDLLPTKTTDQGNRCQCAHQKDKKCWNFCQADKELRAQSTMQKGVKDFKKGKPCPKLGKKCIYQQLVEGRKLRRLEAISNSIKTSFRVAKLKAELYRDQKLIHNRAH.

The first 25 residues, 1–25 (MDYFPVIFSLLFVAFQGAPETAVLG), serve as a signal peptide directing secretion. A propeptide spanning residues 26 to 50 (AELSPRAEKEVQSPPPSTSWRPRRS) is cleaved from the precursor. The interval 28-47 (LSPRAEKEVQSPPPSTSWRP) is disordered. 2 cysteine pairs are disulfide-bonded: C53–C67 and C55–C63. Positions 74-202 (VNTPERVVPY…DQKLIHNRAH (129 aa)) are excised as a propeptide. The endothelin-like stretch occupies residues 110-124 (CQCAHQKDKKCWNFC).

It belongs to the endothelin/sarafotoxin family.

It is found in the secreted. Its function is as follows. Endothelins are endothelium-derived vasoconstrictor peptides. Probable ligand for G-protein coupled receptors EDNRA and EDNRB which activates PTK2B, BCAR1, BCAR3 and, GTPases RAP1 and RHOA cascade in glomerular mesangial cells. Also binds the DEAR/FBXW7-AS1 receptor. Promotes mesenteric arterial wall remodeling via activation of ROCK signaling and subsequent colocalization of NFATC3 with F-actin filaments. NFATC3 then translocates to the nucleus where it subsequently promotes the transcription of the smooth muscle hypertrophy and differentiation marker ACTA2. The sequence is that of Endothelin-1 (Edn1) from Rattus norvegicus (Rat).